A 358-amino-acid polypeptide reads, in one-letter code: DNA polymerase IV (358 aa).

The UmuC domain occupies isoleucine 4–glycine 185. 2 residues coordinate Mg(2+): aspartate 8 and aspartate 103. Residue glutamate 104 is part of the active site.

The protein belongs to the DNA polymerase type-Y family. As to quaternary structure, monomer. Mg(2+) is required as a cofactor.

It localises to the cytoplasm. The catalysed reaction is DNA(n) + a 2'-deoxyribonucleoside 5'-triphosphate = DNA(n+1) + diphosphate. Its function is as follows. Poorly processive, error-prone DNA polymerase involved in untargeted mutagenesis. Copies undamaged DNA at stalled replication forks, which arise in vivo from mismatched or misaligned primer ends. These misaligned primers can be extended by PolIV. Exhibits no 3'-5' exonuclease (proofreading) activity. May be involved in translesional synthesis, in conjunction with the beta clamp from PolIII. The sequence is that of DNA polymerase IV from Shewanella pealeana (strain ATCC 700345 / ANG-SQ1).